A 124-amino-acid polypeptide reads, in one-letter code: Urease subunit beta (124 aa).

The protein belongs to the urease beta subunit family. As to quaternary structure, heterotrimer of UreA (gamma), UreB (beta) and UreC (alpha) subunits. Three heterotrimers associate to form the active enzyme.

The protein localises to the cytoplasm. It catalyses the reaction urea + 2 H2O + H(+) = hydrogencarbonate + 2 NH4(+). It participates in nitrogen metabolism; urea degradation; CO(2) and NH(3) from urea (urease route): step 1/1. The chain is Urease subunit beta from Bacillus velezensis (strain DSM 23117 / BGSC 10A6 / LMG 26770 / FZB42) (Bacillus amyloliquefaciens subsp. plantarum).